A 440-amino-acid chain; its full sequence is Glycerol-3-phosphate dehydrogenase [NAD(+)] 2, mitochondrial (440 aa).

The transit peptide at 1-16 (MLAVRRLTRYTFLKRT) directs the protein to the mitochondrion. Phosphoserine occurs at positions 70, 72, and 75. NAD(+) contacts are provided by residues 90-95 (GSGNWG), phenylalanine 122, and phenylalanine 178. Residue lysine 201 participates in substrate binding. Alanine 234 provides a ligand contact to NAD(+). Lysine 294 serves as the catalytic Proton acceptor. Positions 359 and 388 each coordinate NAD(+). Substrate is bound at residue 359 to 360 (RN).

Belongs to the NAD-dependent glycerol-3-phosphate dehydrogenase family.

The protein localises to the cytoplasm. Its subcellular location is the mitochondrion. The enzyme catalyses sn-glycerol 3-phosphate + NAD(+) = dihydroxyacetone phosphate + NADH + H(+). Catalyzes the production of glycerol under anaerobic growth conditions. Glycerol production serves as a redox sink by consuming the excess cytosolic NADH during anaerobic metabolism. The sequence is that of Glycerol-3-phosphate dehydrogenase [NAD(+)] 2, mitochondrial from Saccharomyces cerevisiae (strain ATCC 204508 / S288c) (Baker's yeast).